The chain runs to 712 residues: Patatin-like phospholipase domain-containing protein ACLA_029670 (712 aa).

A compositionally biased stretch (polar residues) spans 1 to 10 (MTSAEKSATR). Positions 1 to 20 (MTSAEKSATRNIYDPSALPD) are disordered. A helical membrane pass occupies residues 85-105 (WPFLFIVFAWITVLGIAYALT). In terms of domain architecture, PNPLA spans 275–466 (LCLSGGATFA…RTDIPIKALN (192 aa)). A GXSXG motif is present at residues 306-310 (GTSGG). S308 functions as the Nucleophile in the catalytic mechanism. D453 acts as the Proton acceptor in catalysis. A compositionally biased stretch (basic and acidic residues) spans 649–664 (FPERHSDYKDESHYTE). A disordered region spans residues 649-686 (FPERHSDYKDESHYTEVSDSLSTNSSRPHTPDARRGSI). Residues 665–676 (VSDSLSTNSSRP) are compositionally biased toward polar residues. The segment covering 677 to 686 (HTPDARRGSI) has biased composition (basic and acidic residues).

This sequence belongs to the PLPL family.

Its subcellular location is the membrane. Its function is as follows. Probable lipid hydrolase. The sequence is that of Patatin-like phospholipase domain-containing protein ACLA_029670 from Aspergillus clavatus (strain ATCC 1007 / CBS 513.65 / DSM 816 / NCTC 3887 / NRRL 1 / QM 1276 / 107).